A 382-amino-acid chain; its full sequence is uncharacterized protein (382 aa).

A run of 12 helical transmembrane segments spans residues 14 to 34 (GLLL…LWLA), 45 to 65 (MVSS…GYLI), 79 to 99 (LVFA…SWMA), 102 to 122 (FVAG…LMCS), 131 to 151 (LLAA…LLVS), 157 to 177 (LMNV…PLLF), 204 to 224 (LGVN…GLMP), 236 to 256 (NIGF…WPIG), 265 to 285 (LLVL…MLTH), 289 to 309 (APAL…AMAW), 325 to 345 (ALLL…AMLM), and 349 to 369 (SDNL…LMLL).

This sequence belongs to the major facilitator superfamily. YcaD (TC 2.A.1.26) family.

The protein localises to the cell inner membrane. This is an uncharacterized protein from Escherichia fergusonii (strain ATCC 35469 / DSM 13698 / CCUG 18766 / IAM 14443 / JCM 21226 / LMG 7866 / NBRC 102419 / NCTC 12128 / CDC 0568-73).